Reading from the N-terminus, the 295-residue chain is Replication-associated protein A (295 aa).

The disordered stretch occupies residues 1-31 (MSSLPVSESEGEGSGTSVQVPSRGGQVTPGE). The 104-residue stretch at 35-138 (SLRTKHVFLT…PESSWEFGKF (104 aa)) folds into the CRESS-DNA virus Rep endonuclease domain. The short motif at 42–45 (FLTY) is the RCR-1 element. A divalent metal cation is bound by residues E76, H84, and H86. An RCR-2 motif is present at residues 84-86 (HLH). Y124 acts as the For DNA cleavage activity in catalysis. The RCR-3 motif lies at 124–127 (YCMK). The tract at residues 192–204 (SANALFPDPPQTY) is oligomerization.

The protein belongs to the geminiviridae Rep protein family. In terms of assembly, homooligomer. Part of the C- and V-complexes which are RepA-Rep-DNA complexes involved in the c-sense and v-sense transcription.

It is found in the host nucleus. Its subcellular location is the host cytoplasm. Functionally, implicated in enhancement of V-sense gene expression. Acts a an inhibitor of C-sense gene transcription. The polypeptide is Replication-associated protein A (Avena sativa (Oat)).